We begin with the raw amino-acid sequence, 596 residues long: Aspartate--tRNA(Asp/Asn) ligase (596 aa).

Residue Glu-175 participates in L-aspartate binding. The tract at residues 199-202 (QQYK) is aspartate. L-aspartate is bound by residues Arg-221 and His-454. Position 221–223 (221–223 (RDE)) interacts with ATP. Glu-488 contributes to the ATP binding site. An L-aspartate-binding site is contributed by Arg-495. Residue 540 to 543 (GIDR) participates in ATP binding.

This sequence belongs to the class-II aminoacyl-tRNA synthetase family. Type 1 subfamily. As to quaternary structure, homodimer.

The protein localises to the cytoplasm. The catalysed reaction is tRNA(Asx) + L-aspartate + ATP = L-aspartyl-tRNA(Asx) + AMP + diphosphate. In terms of biological role, aspartyl-tRNA synthetase with relaxed tRNA specificity since it is able to aspartylate not only its cognate tRNA(Asp) but also tRNA(Asn). Reaction proceeds in two steps: L-aspartate is first activated by ATP to form Asp-AMP and then transferred to the acceptor end of tRNA(Asp/Asn). This chain is Aspartate--tRNA(Asp/Asn) ligase, found in Rhizobium rhizogenes (strain K84 / ATCC BAA-868) (Agrobacterium radiobacter).